The chain runs to 333 residues: MFERQSNNPEPIEVSDNNPERESTADALLTTRIYISNLDYSSTEDELIEYLKDYKPLSVLVPSHTVRGFRSNHVKPLGIAYADFETPEKAREAVEALNETNFKNRNLKVKLYVPFSPENVCKPAPKPRRLSKLRRSKKPADEENNAASQDPTVEATQERGQASEDPENAANNAKQAKPTSDDTVYCGYLPKNTTDADLREHFKDYNPQEIWIFRTRAAKGPMHLQLHRHYTAALITLNSPETIAKIAEVTSTKKILGKKISVKPAYISKIQEVKKIAEQTGIAERNQTNKGAIKPNSGNGGQPAGPGVAGEPSNPQQNCDNSNNVQPGVSVVA.

The segment at 1–22 is disordered; the sequence is MFERQSNNPEPIEVSDNNPERE. The region spanning 31 to 114 is the RRM 1 domain; it reads TRIYISNLDY…RNLKVKLYVP (84 aa). Disordered stretches follow at residues 123 to 185 and 281 to 333; these read PAPK…DTVY and GIAE…SVVA. Residues 125–137 show a composition bias toward basic residues; sequence PKPRRLSKLRRSK. Polar residues-rich tracts occupy residues 145-160 and 169-182; these read NAASQDPTVEATQERG and AANNAKQAKPTSDD. Residues 182 to 267 enclose the RRM 2 domain; it reads DTVYCGYLPK…KKISVKPAYI (86 aa). Gly residues predominate over residues 298-308; that stretch reads GNGGQPAGPGV. Over residues 313–327 the composition is skewed to polar residues; the sequence is SNPQQNCDNSNNVQP.

The protein belongs to the RRT5 family.

May be involved in the modulation of rDNA transcription. This is Regulator of rDNA transcription protein 5 (RRT5) from Vanderwaltozyma polyspora (strain ATCC 22028 / DSM 70294 / BCRC 21397 / CBS 2163 / NBRC 10782 / NRRL Y-8283 / UCD 57-17) (Kluyveromyces polysporus).